The sequence spans 140 residues: Gonadotropin subunit beta-2 (140 aa).

The signal sequence occupies residues 1-24 (MSVYPECTWLLFVCLCHLLVSAGG). 6 cysteine pairs are disulfide-bonded: C30–C78, C44–C93, C47–C131, C55–C109, C59–C111, and C114–C121. N-linked (GlcNAc...) asparagine glycosylation is present at N34.

This sequence belongs to the glycoprotein hormones subunit beta family. As to quaternary structure, heterodimer of an alpha and a beta chain.

The protein resides in the secreted. In terms of biological role, involved in gametogenesis and steroidogenesis. This chain is Gonadotropin subunit beta-2 (cgbb), found in Anguilla anguilla (European freshwater eel).